We begin with the raw amino-acid sequence, 528 residues long: GMP synthase [glutamine-hydrolyzing] (528 aa).

Residues 13–204 enclose the Glutamine amidotransferase type-1 domain; it reads AIVILDFGSQ…VNHICGCEQD (192 aa). The Nucleophile role is filled by C90. Catalysis depends on residues H178 and E180. In terms of domain architecture, GMPS ATP-PPase spans 205–403; it reads WTTNAFIDEA…LGLPEEIVRR (199 aa). 232–238 contributes to the ATP binding site; sequence SGGVDSS.

As to quaternary structure, homodimer.

The catalysed reaction is XMP + L-glutamine + ATP + H2O = GMP + L-glutamate + AMP + diphosphate + 2 H(+). It functions in the pathway purine metabolism; GMP biosynthesis; GMP from XMP (L-Gln route): step 1/1. Catalyzes the synthesis of GMP from XMP. This chain is GMP synthase [glutamine-hydrolyzing], found in Synechococcus sp. (strain CC9902).